A 357-amino-acid polypeptide reads, in one-letter code: MGSRELNLRERQVLGIIIQLYVVTAAPVGSRYIARNYSLGLSDATIRNVMADLEAEGYISQPHTSAGRIPTDLGYRYYVDLIMKVQRIDEEEKRRMESDFGPISMEGRGTSAEVLVSAAKVLGSISRQLSVVLSPTLSNAVFEKLDMVLLSSTRMMVVLSIQSMFVKTIVMELQHELTRQKVDEVVDLLNERLSGLTLSEIRRSITRRLAGSSCDTNLKDLIVRSADSLFDESPIFERLYISGAEYIVEQPEFKQPERVRELITMIEDKFSVARLVEDIAPKQDLKRTAGHDVSISIGRENSALQAEDLTIVSAPYYAGSMVGTLGILGPKRMDYEHAVRVLNYMADCLTATLSDVN.

It belongs to the HrcA family.

Its function is as follows. Negative regulator of class I heat shock genes (grpE-dnaK-dnaJ and groELS operons). Prevents heat-shock induction of these operons. The polypeptide is Heat-inducible transcription repressor HrcA (Chlorobium luteolum (strain DSM 273 / BCRC 81028 / 2530) (Pelodictyon luteolum)).